We begin with the raw amino-acid sequence, 446 residues long: MKQFEVNFDGLVGPTHNYAGLSYGNVASLNNASAQSSPKQAAKQGLKKMKALADLGMIQGVLAPQARPDVDALRRLGFSGSDANVLQQAAKQAPAIFQACCSASSMWTANAATVSPSADTADGKVHFTPANLTNKYHRSLEPQVTGNILKATFANQQYFSHHNHLPDNEHFGDEGAANHTRLCREYGERGVELFVYGRYAFDKSKPAPVKFPARQTFEASQAVARLHGLSDDNVVFIQQNPDLIDQGVFHNDVISVGNQNVLFYHEQAFLDTDKAFAEIKQKYGAGDLHFIKVITEQVSLQDAIKSYLFNTQLVTLANGEMAIIAPTDCEENPAVSAYLNELVSLNTPIKHIRYYDVKQSMRNGGGPACLRLRVAMNETELAAVNQSTMMNDAQFERLNNWVDKHYRDRLSVDDLRDVALLNESRTALDELTQLLKLGSVYPFQKV.

Substrate-binding positions include 19–28 (AGLSYGNVAS), Asn110, and 137–138 (HR). Glu174 is an active-site residue. Arg214 lines the substrate pocket. His250 is an active-site residue. Residues Asp252 and Asn363 each coordinate substrate. Residue Cys369 is the Nucleophile of the active site.

Belongs to the succinylarginine dihydrolase family. Homodimer.

It catalyses the reaction N(2)-succinyl-L-arginine + 2 H2O + 2 H(+) = N(2)-succinyl-L-ornithine + 2 NH4(+) + CO2. The protein operates within amino-acid degradation; L-arginine degradation via AST pathway; L-glutamate and succinate from L-arginine: step 2/5. Its function is as follows. Catalyzes the hydrolysis of N(2)-succinylarginine into N(2)-succinylornithine, ammonia and CO(2). The polypeptide is N-succinylarginine dihydrolase (Pseudoalteromonas atlantica (strain T6c / ATCC BAA-1087)).